The chain runs to 192 residues: Vascular endothelial growth factor A (192 aa).

An N-terminal signal peptide occupies residues 1–26; the sequence is MNFLLSWIHWGLAALLYFHNAKVLQA. 3 disulfide bridges follow: C52-C94, C83-C128, and C87-C130. Residue N101 is glycosylated (N-linked (GlcNAc...) asparagine).

Belongs to the PDGF/VEGF growth factor family. Homodimer; disulfide-linked. Also found as heterodimer with PGF Interacts with FLT1/VEGFR1 and KDR/VEGFR2 receptors, heparan sulfate and heparin. In terms of tissue distribution, expressed by the venom gland, and probably other tissues.

It is found in the secreted. In terms of biological role, growth factor active in angiogenesis, vasculogenesis and endothelial cell growth. Induces endothelial cell proliferation, promotes cell migration, inhibits apoptosis and induces permeabilization of blood vessels. This Vipera ammodytes ammodytes (Western sand viper) protein is Vascular endothelial growth factor A.